Consider the following 119-residue polypeptide: Large ribosomal subunit protein bL20 (119 aa).

It belongs to the bacterial ribosomal protein bL20 family.

Its function is as follows. Binds directly to 23S ribosomal RNA and is necessary for the in vitro assembly process of the 50S ribosomal subunit. It is not involved in the protein synthesizing functions of that subunit. This chain is Large ribosomal subunit protein bL20, found in Cellvibrio japonicus (strain Ueda107) (Pseudomonas fluorescens subsp. cellulosa).